Consider the following 233-residue polypeptide: Small ribosomal subunit protein uS2 (233 aa).

It belongs to the universal ribosomal protein uS2 family.

This Bacillus anthracis protein is Small ribosomal subunit protein uS2.